Consider the following 710-residue polypeptide: MDINLIKQYINSSLPNDKESLIQYYGQLKQILNALSDKEQQQLLNNNGKISEQQQLSIENNYKVIGSIEEKMKSIEHLFNNLDVSDSNNNNSTSPVFISLDNQNTVNNNNNNNNNNNNNNNNNNNNNNNSLAPTVILDNNDNKKTAEIILPDHHNNTPQQQPEQQVQQQQVQQQQQVQQQQQQPEQQQQHLTEEQIQKQQQSQASIQQAIANMGEKKRSSSRHSGPPEIPPEEIKFDVKTDLLGGGAYGKVYKATCRGKKVAVKVPKKQTLSESELKSFKNEVEIMKQIFHPNVVLCLGACTKPGKVMIVSELMQTDLEKLIHSSEVEPPPLYERMKMCLDAALGINWLHGICNIIHRDLKLANLMISKDKTVKIGDFGFSQVIKTGTTLSDQKGPKGTALYMAPEVMMKHEFNEKADVYSFGLILYEMATCEELFPEYSEIDPFYDAICNKKLRPPIPDSFPKSLKTLIQKCWDHDPNKRPSFNEVTQRMNEVLTDTAISGLDAAMFWKYNFIKPESESVPWNEFVYKLSSVVNLPTQVLSPLAQLFVSQSYEEEIGGVVTMERFDLMNKWFGNFFNSKYGPAILYEMIELLKKRWFHFDISRDISEKRLRGRPENTFLLRLSANDPIKTPFTISKTKGSKPTHKRVSREDVQINEIKQFPMGYKFTVPLDGNELVFGSITQMVEELHRIGNLSIPCPITEIKVPYLTD.

3 stretches are compositionally biased toward low complexity: residues 83-94 (DVSDSNNNNSTS), 107-129 (NNNN…NNNN), and 197-208 (QKQQQSQASIQQ). Disordered stretches follow at residues 83–136 (DVSD…PTVI) and 189–232 (QHLT…IPPE). One can recognise a Protein kinase domain in the interval 237 to 495 (DVKTDLLGGG…EVTQRMNEVL (259 aa)). ATP-binding positions include 243–251 (LGGGAYGKV) and Lys264. The Proton acceptor role is filled by Asp359. Residues 597 to 707 (WFHFDISRDI…CPITEIKVPY (111 aa)) form the SH2 domain.

It belongs to the protein kinase superfamily. Ser/Thr protein kinase family. SH2 domain-containing protein kinase subfamily.

It is found in the membrane. It carries out the reaction L-seryl-[protein] + ATP = O-phospho-L-seryl-[protein] + ADP + H(+). The catalysed reaction is L-threonyl-[protein] + ATP = O-phospho-L-threonyl-[protein] + ADP + H(+). Functionally, required for proper chemotaxis and phagocytosis; proper spatiotemporal control of F-actin levels in chemotaxing cells. Negative regulator of the PI3K (phosphatidylinositol 3 kinase) pathway. Predominantly phosphorylates serines and threonines and tyrosines at a lower level. This is Dual specificity protein kinase shkE (shkE) from Dictyostelium discoideum (Social amoeba).